A 464-amino-acid polypeptide reads, in one-letter code: NADH-quinone oxidoreductase subunit N 2 (464 aa).

14 consecutive transmembrane segments (helical) span residues 12–32 (VGII…LIGF), 33–53 (LGFL…LAGY), 62–82 (INAF…FVIF), 93–113 (TFVE…IMVS), 117–137 (LAVI…SVGM), 152–172 (LVLG…YIGA), 189–209 (FALA…AAPF), 227–247 (FIST…ASYI), 254–274 (FSYI…LVAY), 282–304 (MLAY…YNPL), 310–330 (IFYV…LSIL), 351–371 (PFLA…PPFA), 400–420 (IIAA…EPAT), and 434–454 (IGIS…NILF).

The protein belongs to the complex I subunit 2 family. NDH-1 is composed of 14 different subunits. Subunits NuoA, H, J, K, L, M, N constitute the membrane sector of the complex.

The protein resides in the cell inner membrane. It catalyses the reaction a quinone + NADH + 5 H(+)(in) = a quinol + NAD(+) + 4 H(+)(out). Its function is as follows. NDH-1 shuttles electrons from NADH, via FMN and iron-sulfur (Fe-S) centers, to quinones in the respiratory chain. The immediate electron acceptor for the enzyme in this species is believed to be ubiquinone. Couples the redox reaction to proton translocation (for every two electrons transferred, four hydrogen ions are translocated across the cytoplasmic membrane), and thus conserves the redox energy in a proton gradient. The polypeptide is NADH-quinone oxidoreductase subunit N 2 (Hydrogenobaculum sp. (strain Y04AAS1)).